The following is a 195-amino-acid chain: Holliday junction branch migration complex subunit RuvA (195 aa).

The segment at 1–63 (MIASVRGEVL…EDSQTLYGFA (63 aa)) is domain I. The tract at residues 64–138 (DSDARDLFLT…DKVGSSTSSG (75 aa)) is domain II. Positions 138 to 142 (GVAAA) are flexible linker. Residues 143–195 (GGHGIRGPVVEALVGLGFAVKQAEEATDKVLANDPEATTSSALRAALSMLGKK) are domain III.

The protein belongs to the RuvA family. Homotetramer. Forms an RuvA(8)-RuvB(12)-Holliday junction (HJ) complex. HJ DNA is sandwiched between 2 RuvA tetramers; dsDNA enters through RuvA and exits via RuvB. An RuvB hexamer assembles on each DNA strand where it exits the tetramer. Each RuvB hexamer is contacted by two RuvA subunits (via domain III) on 2 adjacent RuvB subunits; this complex drives branch migration. In the full resolvosome a probable DNA-RuvA(4)-RuvB(12)-RuvC(2) complex forms which resolves the HJ.

It is found in the cytoplasm. In terms of biological role, the RuvA-RuvB-RuvC complex processes Holliday junction (HJ) DNA during genetic recombination and DNA repair, while the RuvA-RuvB complex plays an important role in the rescue of blocked DNA replication forks via replication fork reversal (RFR). RuvA specifically binds to HJ cruciform DNA, conferring on it an open structure. The RuvB hexamer acts as an ATP-dependent pump, pulling dsDNA into and through the RuvAB complex. HJ branch migration allows RuvC to scan DNA until it finds its consensus sequence, where it cleaves and resolves the cruciform DNA. In Mycolicibacterium gilvum (strain PYR-GCK) (Mycobacterium gilvum (strain PYR-GCK)), this protein is Holliday junction branch migration complex subunit RuvA.